Reading from the N-terminus, the 6298-residue chain is Adhesion G-protein coupled receptor V1 (6298 aa).

The first 28 residues, 1–28 (MSVTSEPGMISSFLLVYLSTLFISFVFG), serve as a signal peptide directing secretion. Calx-beta domains are found at residues 29–116 (EAEI…FHLT), 132–236 (ASVT…IQLR), 251–362 (VEII…IMLL), 389–489 (YGVL…LTIL), 646–746 (PAIA…TLSL), 764–862 (DLII…VILS), 877–980 (VNIT…IILL), 994–1094 (ASLR…IVLF), 1108–1208 (ATVI…LRLV), 1440–1540 (AMPR…FLLK), 1562–1662 (QKSD…VTLV), 1706–1805 (TGLP…VELL), 1846–1948 (ILVT…VSIL), 1962–2075 (TLTI…IELF), 2103–2202 (HLVI…VQLL), 2218–2320 (VITI…VQLA), 2437–2537 (TLCL…FLIS), 2576–2672 (FIIY…VRLG), 2687–2786 (VTVN…VVLY), 2810–2921 (LTVE…VNLT), 2945–3044 (QIVI…LLLT), and 3067–3167 (DGPG…VCTL). Topologically, residues 29–5901 (EAEIRFTGQT…TDNSSSYNEA (5873 aa)) are extracellular. 6 EAR repeats span residues 3251–3292 (VFSI…RWQG), 3293–3341 (TFVP…MLTA), 3344–3389 (RLVL…RWNG), 3391–3435 (NFAW…TWSG), 3437–3484 (QFIN…VWEM), and 3488–3530 (SLRY…CWNS). Calx-beta domains lie at 3581–3622 (QSDF…RVQL), 3636–3736 (SVRV…VVTL), 3772–3872 (GAVR…VTIA), 3919–4003 (GGVI…ISLV), 4017–4120 (VNVV…IELT), 4135–4235 (SVII…EFQL), 4251–4351 (ARIT…LAIT), 4384–4484 (RIII…ILLI), 4507–4607 (SPFG…IVQL), 4628–4728 (KFGD…AVQL), 4989–5089 (TTAE…INLT), 5281–5325 (AVEE…YVFL), and 5361–5461 (IGFS…FVEL). The 157-residue stretch at 5740 to 5896 (SILALHWNPQ…AVYAQTDNSS (157 aa)) folds into the GAIN-B domain. Intrachain disulfides connect C5849–C5878 and C5866–C5880. The interval 5849–5896 (CLLWNQAAASWLSDSQFCKVVEDASDYVECACSHMSVYAVYAQTDNSS) is GPS. The chain crosses the membrane as a helical span at residues 5902 to 5922 (FFSAGLICISGLCLAVVSHMF). At 5923 to 5932 (CARHSMFAAK) the chain is on the cytoplasmic side. Residues 5933 to 5953 (LLTHMMVASLGTQILFLASAY) traverse the membrane as a helical segment. The Extracellular segment spans residues 5954 to 5973 (ASPHLSEESCSAVAAVAHYL). The helical transmembrane segment at 5974 to 5994 (YLCQFSWMLIQSVNFWYVLVV) threads the bilayer. The Cytoplasmic segment spans residues 5995–6003 (SDEHTERRC). Residues 6004–6024 (LLFCLLSWGLPSFVVILLILI) form a helical membrane-spanning segment. The Extracellular segment spans residues 6025-6052 (LRGIYHRSMPQIYGLIHGDLCFIPNIYA). A helical transmembrane segment spans residues 6053–6073 (ALFTAALVPLMCLVVVFVVFI). Topologically, residues 6074 to 6097 (HAYQLKPQWKGYDDVFRGRTNAAE) are cytoplasmic. A helical transmembrane segment spans residues 6098–6118 (IPLILYLFALISMTWLWGGLH). Topologically, residues 6119 to 6126 (MAYGHFWM) are extracellular. The chain crosses the membrane as a helical span at residues 6127-6147 (LVLFVIFNSLQGLYVFVVYFI). At 6148-6298 (LHNQTCCPMK…RRIPIADTHL (151 aa)) the chain is on the cytoplasmic side. Disordered stretches follow at residues 6206–6242 (ERSS…GSLI) and 6264–6283 (SVSD…LTDS). 2 stretches are compositionally biased toward polar residues: residues 6208–6226 (SSFQ…SPQN) and 6265–6283 (VSDN…LTDS).

Belongs to the G-protein coupled receptor 2 family. Adhesion G-protein coupled receptor (ADGR) subfamily. As to quaternary structure, forms a heterodimer, consisting of a large extracellular region (alpha subunit) non-covalently linked to a seven-transmembrane moiety (beta subunit). Interacts (via the cytoplasmic region) with PDZD7. Component of USH2 complex, composed of ADGRV1, PDZD7, USH2A and WHRN. Interacts with USH2A and WHRN. Interacts (via the cytoplasmic region) with MYO7A (via MyTH4-FERM domains). Autoproteolytically cleaved into 2 subunits, an extracellular alpha subunit and a seven-transmembrane subunit. As to expression, expressed by oligodendrocytes. In midbrain, enriched in the myelinated regions of the superior and inferior colliculi. In the cochlea, expressed in developing hair cells. Expressed by photoreceptors in the retina.

The protein resides in the cell membrane. The protein localises to the cell projection. Its subcellular location is the stereocilium membrane. It is found in the photoreceptor inner segment. It localises to the secreted. Its function is as follows. G-protein coupled receptor which has an essential role in the development of hearing and vision. Couples to G-alpha(i)-proteins, GNAI1/2/3, G-alpha(q)-proteins, GNAQ, as well as G-alpha(s)-proteins, GNAS, inhibiting adenylate cyclase (AC) activity and cAMP production. Required for the hair bundle ankle formation, which connects growing stereocilia in developing cochlear hair cells of the inner ear. In response to extracellular calcium, activates kinases PKA and PKC to regulate myelination by inhibiting the ubiquitination of MAG, thus enhancing the stability of this protein in myelin-forming cells of the auditory pathway. In retina photoreceptors, the USH2 complex is required for the maintenance of periciliary membrane complex that seems to play a role in regulating intracellular protein transport. Involved in the regulation of bone metabolism. Cleaved ADGRV1 beta-subunit couples with G-alpha(i)-proteins, GNAI1/2/3, and constitutively inhibits adenylate cyclase (AC) activity with a stronger effect than full ADGRV1. The sequence is that of Adhesion G-protein coupled receptor V1 from Mus musculus (Mouse).